The following is a 522-amino-acid chain: Protein nucleotidyltransferase YdiU (522 aa).

ATP contacts are provided by glycine 109, glycine 111, arginine 112, lysine 132, aspartate 144, glycine 145, arginine 195, and arginine 202. Aspartate 271 functions as the Proton acceptor in the catalytic mechanism. 2 residues coordinate Mg(2+): asparagine 272 and aspartate 281. Position 281 (aspartate 281) interacts with ATP.

This sequence belongs to the SELO family. Mg(2+) serves as cofactor. Requires Mn(2+) as cofactor.

It carries out the reaction L-seryl-[protein] + ATP = 3-O-(5'-adenylyl)-L-seryl-[protein] + diphosphate. The enzyme catalyses L-threonyl-[protein] + ATP = 3-O-(5'-adenylyl)-L-threonyl-[protein] + diphosphate. It catalyses the reaction L-tyrosyl-[protein] + ATP = O-(5'-adenylyl)-L-tyrosyl-[protein] + diphosphate. The catalysed reaction is L-histidyl-[protein] + UTP = N(tele)-(5'-uridylyl)-L-histidyl-[protein] + diphosphate. It carries out the reaction L-seryl-[protein] + UTP = O-(5'-uridylyl)-L-seryl-[protein] + diphosphate. The enzyme catalyses L-tyrosyl-[protein] + UTP = O-(5'-uridylyl)-L-tyrosyl-[protein] + diphosphate. Nucleotidyltransferase involved in the post-translational modification of proteins. It can catalyze the addition of adenosine monophosphate (AMP) or uridine monophosphate (UMP) to a protein, resulting in modifications known as AMPylation and UMPylation. The polypeptide is Protein nucleotidyltransferase YdiU (Burkholderia vietnamiensis (strain G4 / LMG 22486) (Burkholderia cepacia (strain R1808))).